Here is a 367-residue protein sequence, read N- to C-terminus: Peptide chain release factor 2 (367 aa).

The residue at position 251 (glutamine 251) is an N5-methylglutamine.

Belongs to the prokaryotic/mitochondrial release factor family. In terms of processing, methylated by PrmC. Methylation increases the termination efficiency of RF2.

The protein resides in the cytoplasm. Its function is as follows. Peptide chain release factor 2 directs the termination of translation in response to the peptide chain termination codons UGA and UAA. The protein is Peptide chain release factor 2 of Nautilia profundicola (strain ATCC BAA-1463 / DSM 18972 / AmH).